The sequence spans 57 residues: Large ribosomal subunit protein bL32 (57 aa).

The protein belongs to the bacterial ribosomal protein bL32 family.

The polypeptide is Large ribosomal subunit protein bL32 (Staphylococcus saprophyticus subsp. saprophyticus (strain ATCC 15305 / DSM 20229 / NCIMB 8711 / NCTC 7292 / S-41)).